We begin with the raw amino-acid sequence, 462 residues long: Glycine--tRNA ligase (462 aa).

The substrate site is built by Arg-100 and Glu-170. Residues 202–204 (RNE), 212–217 (FRTREF), 287–288 (EL), and 331–334 (GVER) contribute to the ATP site. 217-221 (FEQME) contacts substrate. 327–331 (EPSVG) is a binding site for substrate.

It belongs to the class-II aminoacyl-tRNA synthetase family. In terms of assembly, homodimer.

It is found in the cytoplasm. The enzyme catalyses tRNA(Gly) + glycine + ATP = glycyl-tRNA(Gly) + AMP + diphosphate. Its function is as follows. Catalyzes the attachment of glycine to tRNA(Gly). This is Glycine--tRNA ligase from Malacoplasma penetrans (strain HF-2) (Mycoplasma penetrans).